Reading from the N-terminus, the 145-residue chain is Angiogenin-3 (145 aa).

Residues 1–24 form the signal peptide; the sequence is MVMSPGSLLLVFLLSLDVIPPTLA. Gln-25 carries the post-translational modification Pyrrolidone carboxylic acid. The active-site Proton acceptor is the His-37. 3 disulfide bridges follow: Cys-50–Cys-104, Cys-63–Cys-115, and Cys-81–Cys-130. Positions 55 to 59 match the Nucleolar localization signal motif; sequence KKRKL. Positions 65 and 106 each coordinate Zn(2+). The active-site Proton donor is His-137.

It belongs to the pancreatic ribonuclease family.

The protein localises to the cytoplasmic vesicle. It localises to the secretory vesicle lumen. Its subcellular location is the secreted. The protein resides in the nucleus. It is found in the nucleolus. Divalent metal ions, such as Cu2+ and Zn2+, may inhibit the ribonucleolytic activity. Has low ribonuclease activity (in vitro). The polypeptide is Angiogenin-3 (Ang3) (Mus musculus (Mouse)).